The sequence spans 594 residues: Putative aldehyde oxidase Art an 7 (594 aa).

A signal peptide spans 1-23 (MASSIKTVILFLLPLLLAYSVLA). Residues 28–56 (TDGGDKPGPEIDDGGGDKPVPGNNDGASD) are disordered.

Post-translationally, the N-terminus is blocked. Glycosylated. As to expression, expressed in pollen (at protein level).

It localises to the cytoplasm. The enzyme catalyses an aldehyde + O2 + H2O = a carboxylate + H2O2 + H(+). In terms of biological role, catalyzes the oxidation of aldehydes to the corresponding carboxylate by coupling the reaction to the reduction of dioxygen to hydrogen peroxide. Substrates include glyoxal and other aldehydes. Does not have enzymatic activity on D-galactose. This is Putative aldehyde oxidase Art an 7 from Artemisia annua (Sweet wormwood).